Reading from the N-terminus, the 511-residue chain is 2-isopropylmalate synthase (511 aa).

The region spanning 5–267 is the Pyruvate carboxyltransferase domain; it reads LIVFDTTLRD…DTNVDISQIV (263 aa). Mn(2+) contacts are provided by Asp14, His202, His204, and Asn238. The tract at residues 393–511 is regulatory domain; sequence KLSWLKVVSE…YPVERAYPQV (119 aa).

It belongs to the alpha-IPM synthase/homocitrate synthase family. LeuA type 1 subfamily. In terms of assembly, homodimer. Mn(2+) serves as cofactor.

The protein resides in the cytoplasm. The enzyme catalyses 3-methyl-2-oxobutanoate + acetyl-CoA + H2O = (2S)-2-isopropylmalate + CoA + H(+). Its pathway is amino-acid biosynthesis; L-leucine biosynthesis; L-leucine from 3-methyl-2-oxobutanoate: step 1/4. Its function is as follows. Catalyzes the condensation of the acetyl group of acetyl-CoA with 3-methyl-2-oxobutanoate (2-ketoisovalerate) to form 3-carboxy-3-hydroxy-4-methylpentanoate (2-isopropylmalate). This is 2-isopropylmalate synthase from Nitrosococcus oceani (strain ATCC 19707 / BCRC 17464 / JCM 30415 / NCIMB 11848 / C-107).